Reading from the N-terminus, the 92-residue chain is Small ribosomal subunit protein bS16 (92 aa).

Belongs to the bacterial ribosomal protein bS16 family.

This is Small ribosomal subunit protein bS16 from Staphylococcus carnosus (strain TM300).